The sequence spans 418 residues: Glutamyl-tRNA reductase (418 aa).

Substrate-binding positions include 49–52 (TCNR), serine 109, 114–116 (EPQ), and glutamine 120. Residue cysteine 50 is the Nucleophile of the active site. Position 189 to 194 (189 to 194 (GAGETI)) interacts with NADP(+).

This sequence belongs to the glutamyl-tRNA reductase family. Homodimer.

The catalysed reaction is (S)-4-amino-5-oxopentanoate + tRNA(Glu) + NADP(+) = L-glutamyl-tRNA(Glu) + NADPH + H(+). The protein operates within porphyrin-containing compound metabolism; protoporphyrin-IX biosynthesis; 5-aminolevulinate from L-glutamyl-tRNA(Glu): step 1/2. In terms of biological role, catalyzes the NADPH-dependent reduction of glutamyl-tRNA(Glu) to glutamate 1-semialdehyde (GSA). This chain is Glutamyl-tRNA reductase, found in Erwinia tasmaniensis (strain DSM 17950 / CFBP 7177 / CIP 109463 / NCPPB 4357 / Et1/99).